We begin with the raw amino-acid sequence, 852 residues long: MPANLSSALETFKQQRDAAEAHYLKANRVSVFFREYTAAVETLLAALWAEYFQNSALCLMAVGGFGRGELYPCSDVDLAVVSPAPLSDGIQEQIARFVQTLWDCKLMPSVKSGSVDELCESVRNDITGDTAFLEARFLFGNRQTVDKLAEKMNAQRNVAAFVEAKLVEMEHRHAKSQGSGAVLEPNIKSCPGGLRDIHTLLWIAKAQGLATDLPDLLKQRILTRAEAGMLSHGYRRLAHIRIHLHLNAKRAEDRLLFDLQPQVAESMGYEGLNLRRQSEELMRVFYRAIKTVKQLGGILTPMLQSRVSSTPLRVTLRIDDDYIQVNNQIAARHTDIFFRRPEHIFKIVEIMQQRNDITALEPQTLRAWWGATRKINRSFYQNPENRRRFAGFFRNGNGLTQTLRFLNLYGVLGRYLPAWEKIIGLLQHDLFHIYPVDDHILTVVRNVRRLALDMHSHELPYASALMQSFEKQDILYLAAFFHDIAKGRGGDHAIQGIADARQFAADHFLTGEESDLLAWLVENHLLMSAVAQKEDIQDPSVLDAFCKRVQTHERLSALYLLTISDIRGTNPKLWNAWRASLLESLFHAAGRYLTGNGGNPHTLFGRRRQEAADLLTRAAVPEKQQKKLWNALGSAYFARHQSREILWHAANLVHDFETPIVRSRILPKSDSFQVMVFMPNGPRLFARLCRIFSRHGFDILAARAFITEHDYILDTFIVQIPSQHAPEDYPDIQSALEAELNSFIHGHTVAETQSRSRRISRRSRYMPIAPSITITPEEDYPDWYSVEITAVNRPFLLADMAEVFFAHNVSLRYAKISTLDERAEDSFTVFSPDLKNPKIQSSLKQTLLEQLS.

A uridylyltransferase region spans residues 1 to 318; sequence MPANLSSALE…STPLRVTLRI (318 aa). The tract at residues 319–672 is uridylyl-removing; it reads DDDYIQVNNQ…SRILPKSDSF (354 aa). Residues 436–558 form the HD domain; the sequence is VDDHILTVVR…VQTHERLSAL (123 aa). 2 consecutive ACT domains span residues 673–757 and 785–852; these read QVMV…SRSR and SVEI…EQLS.

It belongs to the GlnD family. Requires Mg(2+) as cofactor.

It carries out the reaction [protein-PII]-L-tyrosine + UTP = [protein-PII]-uridylyl-L-tyrosine + diphosphate. The enzyme catalyses [protein-PII]-uridylyl-L-tyrosine + H2O = [protein-PII]-L-tyrosine + UMP + H(+). With respect to regulation, uridylyltransferase (UTase) activity is inhibited by glutamine, while glutamine activates uridylyl-removing (UR) activity. In terms of biological role, modifies, by uridylylation and deuridylylation, the PII regulatory proteins (GlnB and homologs), in response to the nitrogen status of the cell that GlnD senses through the glutamine level. Under low glutamine levels, catalyzes the conversion of the PII proteins and UTP to PII-UMP and PPi, while under higher glutamine levels, GlnD hydrolyzes PII-UMP to PII and UMP (deuridylylation). Thus, controls uridylylation state and activity of the PII proteins, and plays an important role in the regulation of nitrogen assimilation and metabolism. This is Bifunctional uridylyltransferase/uridylyl-removing enzyme from Neisseria meningitidis serogroup B (strain ATCC BAA-335 / MC58).